Consider the following 1007-residue polypeptide: Retinoblastoma-related protein (1007 aa).

The interval 406–604 is domain A; it reads TPVTTAMTTA…EKGSSMYNSL (199 aa). The segment at 406-856 is pocket; the sequence is TPVTTAMTTA…NEIFIPAVKP (451 aa). The tract at residues 605-725 is spacer; it reads IVARAALSAE…PGREGETCAE (121 aa). The interval 644–665 is disordered; sequence PVPSLQKRESSPGQNGDIRSPK. The segment at 726–856 is domain B; that stretch reads TGINIFFSKI…NEIFIPAVKP (131 aa).

It belongs to the retinoblastoma protein (RB) family.

The protein resides in the nucleus. Its function is as follows. Regulator of biological processes that recruits a histone deacetylase to control gene transcription. May play a role in the entry into mitosis, negatively regulating the cell proliferation. Formation of stable complexes with geminiviridae replication-associated proteins may create a cellular environment which favors viral DNA replication. This Vitis vinifera (Grape) protein is Retinoblastoma-related protein (RBR).